The sequence spans 2346 residues: N-benzoylphenylalaninol synthetase apmA (2346 aa).

An adenylation 1 region spans residues 263–652; sequence ESAAQKSPDA…GRKDLQVKIR (390 aa). Residues 784–860 form the Carrier 1 domain; the sequence is MPTTTTEMTL…DMAKAMTSTR (77 aa). Serine 821 carries the post-translational modification O-(pantetheine 4'-phosphoryl)serine. Residues 896–1306 are condensation; that stretch reads QDAYPCSPLQ…ISPQDKENLL (411 aa). An adenylation 2 region spans residues 1330–1713; that stretch reads SQPNAPAICA…GRKDTQVKIR (384 aa). In terms of domain architecture, Carrier 2 spans 1842 to 1924; the sequence is SALRASEDKA…GLAAFIDAEL (83 aa). An O-(pantetheine 4'-phosphoryl)serine modification is found at serine 1883. Residues 1960–2311 form a reductase (R) domain region; it reads VTGGTGFLGT…RNVQFLVEAG (352 aa).

Belongs to the NRP synthetase family.

It catalyses the reaction benzoate + L-phenylalanine + 2 AH2 + 2 ATP = N-benzoyl-L-phenylalaninol + 2 A + 2 AMP + 2 diphosphate + H(+). It functions in the pathway secondary metabolite biosynthesis. Nonribosomal peptide synthase; part of the gene cluster that mediates the biosynthesis of asperphenamate, a rare linear amino acid ester that exhibits antitumor activity towards a number of cell lines. The structure of asperphenamate contains two subunits, N-benzoylphenylalanine and N-benzoylphenylalaninol, which are connected by an inter-molecular ester bond. The first step of asperphenamate biosynthesis is the generation of N-benzoylphenylalaninol by the nonribosomal peptide synthase apmA. Using phenylalanine and benzoic acid as substrates, apmA catalyzes amide bond formation and tethers the intermediate into the NRPS chain. Then, the terminal R domain of apmA catalyzes the reduction reaction to get the shunt product N-benzoylphenylalaninol. Subsequently, the nonribosomal peptide synthase apmB activates the same substrates as does apmA (phenylalanine and benzoic acid) to produce N-benzoylphenylalanine before condensing N-benzoylphenylalanine and N-benzoylphenylalaninol to release asperphenamate. This is N-benzoylphenylalaninol synthetase apmA from Penicillium brevicompactum.